The chain runs to 994 residues: Receptor-like protein 6 (994 aa).

A signal peptide spans 1–25 (MTGLYSSMSFFLRTIVLLFSTSSFC). Topologically, residues 26 to 946 (NTFASLTQDS…SSSSSSEEDE (921 aa)) are extracellular. Residues Asn116, Asn134, and Asn154 are each glycosylated (N-linked (GlcNAc...) asparagine). LRR repeat units follow at residues 122-146 (LQHLQSVNLAYNNFTNSPIPAEFSK), 148-171 (MRLERLNLSRSSFSGHISIKLLQL), 174-199 (LVSLDLSSSFPYSPSSLSIEKPLFLH), 205-228 (FMNLRELDMSSVDISSAIPIEFSY), 230-253 (WSLRSLTLKGCNLLGRFPNSVLLI), 254-278 (PNLESISLDHNLNLEGSLPNFLRNN), 280-301 (LLKLSIYNTSFSGTIPNSISNL), 302-325 (KHLTSLKLQQSAFSGRIPSSLRSL), 326-349 (SHLSNLVLSENNFVGEIPSSVSNL), 350-373 (KQLTLFDVSDNNLNGNFPSSLLNL), 375-397 (QLRYIDICSNHFTGFLPPTISQL), 398-421 (SNLEFFSACDNSFTGSIPSSLFNI), 423-445 (SLTTLGLSYNQLNDTTNIKNISL), 446-471 (LHNLQRLLLDNNNFKASQVDLDVFLS), 477-497 (SLALSGIPLSTTNITSDSEFS), 498-520 (SHLEYLELSGCNIIEFPEFIRNQ), 521-544 (RNLSSIDLSNNNIKGQVPNWLWRL), 546-569 (ELSTVDLSNNSLIGFNGSLKALSG), and 571-595 (KIVMLDLSSNAFQGPLFMPPRGIQY). Residues Asn277 and Asn287 are each glycosylated (N-linked (GlcNAc...) asparagine). 3 N-linked (GlcNAc...) asparagine glycosylation sites follow: Asn420, Asn435, and Asn442. An N-linked (GlcNAc...) asparagine glycan is attached at Asn489. Residues Asn522, Asn554, and Asn561 are each glycosylated (N-linked (GlcNAc...) asparagine). An LRR 20; degenerate repeat occupies 597–613 (LGSYNNFTGYIPPSICG). Asn602 carries N-linked (GlcNAc...) asparagine glycosylation. 10 LRR repeats span residues 614–637 (LANPLILDLSNNNLHGLIPRCLEA), 639–663 (MSSLSVLNLRNNSLDGSLPNIFMNA), 665–687 (VLSSLDVSHNTLEGKLPASLAGC), 689–710 (ALEILNVESNNINDTFPFWLNS), 711–737 (LPKLQVLVLRSNNFRGTLHNVDGVWFG), 739–762 (PLLRITDVSHNDFVGTLPSDYFMN), 803–827 (LTKYTVIDFAGNKIQGKIPESVGIL), 828–851 (KELHVLNLSSNAFTGHIPSSLANL), 852–875 (TNLESLDISQNKIGGEIPPELGTL), and 877–900 (SLEWINVSHNQLVGSIPQGTQFHR). The N-linked (GlcNAc...) asparagine glycan is linked to Asn649. Asn701 is a glycosylation site (N-linked (GlcNAc...) asparagine). Asn762 is a glycosylation site (N-linked (GlcNAc...) asparagine). N-linked (GlcNAc...) asparagine glycans are attached at residues Asn834 and Asn850. 2 N-linked (GlcNAc...) asparagine glycosylation sites follow: Asn882 and Asn902. A helical transmembrane segment spans residues 947–967 (LISWIAACLGFAPGMVFGLTM). Over 968-994 (GYIMTSHKHEWFMDTFGRRKGRSTRTR) the chain is Cytoplasmic.

It belongs to the RLP family.

It is found in the cell membrane. This is Receptor-like protein 6 from Arabidopsis thaliana (Mouse-ear cress).